A 472-amino-acid polypeptide reads, in one-letter code: 3-isopropylmalate dehydratase large subunit (472 aa).

[4Fe-4S] cluster contacts are provided by cysteine 347, cysteine 407, and cysteine 410.

Belongs to the aconitase/IPM isomerase family. LeuC type 1 subfamily. In terms of assembly, heterodimer of LeuC and LeuD. [4Fe-4S] cluster is required as a cofactor.

It catalyses the reaction (2R,3S)-3-isopropylmalate = (2S)-2-isopropylmalate. The protein operates within amino-acid biosynthesis; L-leucine biosynthesis; L-leucine from 3-methyl-2-oxobutanoate: step 2/4. In terms of biological role, catalyzes the isomerization between 2-isopropylmalate and 3-isopropylmalate, via the formation of 2-isopropylmaleate. The chain is 3-isopropylmalate dehydratase large subunit from Bacillus velezensis (strain DSM 23117 / BGSC 10A6 / LMG 26770 / FZB42) (Bacillus amyloliquefaciens subsp. plantarum).